The primary structure comprises 780 residues: MQRIQLNITGMSCSCCAPNGWNNLPNKLSDFSTLVNSATRVAAINLSEVTQTAEVCEAVRRAALCTDGGEALQRRQADADNARYLLIRLAVAAALFVPLAHLSVMFAVLPSTHFPGWEWMLTALAIPVVTWAAWPFHRVAIHNARYHGASMETLISTGITAATIWSLYTVFGHHQSTEHRGVWRALLGSDAIYFEVAAGITVFVLAGKYYTARAKSHASIALLALAALSAKDAAVLQPDGSEMVIPANELNEQQRFVVRPGQTIAADGLVIDGSATVSMSPITGEAKPVRVNPGAQVIGGTVVLNGRLIVEAAAVGDETQLAGMVRLVEQAQQQNANAQRLADRIASVFVPCVFAVAALTAVGWLIAGSGPDRVFSAAIAVLVIACPCALGLATPTAMMVASGRGAQLGILLKGHESFEATRAVDTVVFDKTGTLTTGQLKVSAVTAAPGWQANEVLQMAATVESASEHAVALAIAASTTHREPVANFRAVPGHGVSGTVAERAVRVGKPSWIASRCNSTTLVTARRNAELRGETAVFVEIDGEQCGVIAVADAVKASAADAVAALHDRGFRTALLTGDNPASAAAVASRIGIDEVIADILPEDKVDVIEQLRDRGHVVAMVGDGINDGPALARADLGMAIGRGTDVAIGAADIILVRDNLDVVPITLDLAAATMRTIKFNMVWAFGYNIAAIPIAAAGLLNPLVAGAAMAFSSFFVVSNSLRLRNFGAILSCGTSRHRTVKRWRCPPPTRLRSTACSPVDASPLRPVAHRTGVKPPTHR.

The HMA domain maps to 2–67 (QRIQLNITGM…AVRRAALCTD (66 aa)). Cu(+) is bound by residues Cys13 and Cys16. A run of 6 helical transmembrane segments spans residues 89 to 109 (LAVAAALFVPLAHLSVMFAVL), 114 to 134 (FPGWEWMLTALAIPVVTWAAW), 153 to 173 (TLISTGITAATIWSLYTVFGH), 185 to 205 (ALLGSDAIYFEVAAGITVFVL), 348 to 368 (VFVPCVFAVAALTAVGWLIAG), and 374 to 394 (VFSAAIAVLVIACPCALGLAT). Asp430 acts as the 4-aspartylphosphate intermediate in catalysis. The next 2 membrane-spanning stretches (helical) occupy residues 680 to 698 (FNMVWAFGYNIAAIPIAAA) and 704 to 722 (LVAGAAMAFSSFFVVSNSL).

Belongs to the cation transport ATPase (P-type) (TC 3.A.3) family. Type IB subfamily.

It localises to the cell membrane. It carries out the reaction Cu(+)(in) + ATP + H2O = Cu(+)(out) + ADP + phosphate + H(+). In terms of biological role, involved in copper export. This chain is Copper-exporting P-type ATPase (ctpA), found in Mycobacterium leprae (strain TN).